The chain runs to 185 residues: Large ribosomal subunit protein bL25 (185 aa).

Belongs to the bacterial ribosomal protein bL25 family. CTC subfamily. In terms of assembly, part of the 50S ribosomal subunit; part of the 5S rRNA/L5/L18/L25 subcomplex. Contacts the 5S rRNA. Binds to the 5S rRNA independently of L5 and L18.

This is one of the proteins that binds to the 5S RNA in the ribosome where it forms part of the central protuberance. The chain is Large ribosomal subunit protein bL25 from Chlamydia trachomatis serovar D (strain ATCC VR-885 / DSM 19411 / UW-3/Cx).